The following is a 340-amino-acid chain: 3-isopropylmalate dehydrogenase (340 aa).

The substrate site is built by arginine 88, arginine 98, arginine 122, and aspartate 212. Mg(2+) is bound by residues aspartate 212, aspartate 236, and aspartate 240. Residue 272 to 284 (GSAPDIMGKGIAD) participates in NAD(+) binding.

Belongs to the isocitrate and isopropylmalate dehydrogenases family. LeuB type 2 subfamily. In terms of assembly, homodimer. The cofactor is Mg(2+). Mn(2+) is required as a cofactor.

The protein resides in the cytoplasm. It catalyses the reaction (2R,3S)-3-isopropylmalate + NAD(+) = 4-methyl-2-oxopentanoate + CO2 + NADH. It functions in the pathway amino-acid biosynthesis; L-leucine biosynthesis; L-leucine from 3-methyl-2-oxobutanoate: step 3/4. Catalyzes the oxidation of 3-carboxy-2-hydroxy-4-methylpentanoate (3-isopropylmalate) to 3-carboxy-4-methyl-2-oxopentanoate. The product decarboxylates to 4-methyl-2 oxopentanoate. This is 3-isopropylmalate dehydrogenase from Corynebacterium efficiens (strain DSM 44549 / YS-314 / AJ 12310 / JCM 11189 / NBRC 100395).